The primary structure comprises 540 residues: DEAD-box ATP-dependent RNA helicase 57 (540 aa).

The segment at 24–73 (DFARFRQGPPAPDVASAAAPSPEKKRKRQSKAKAKKSKKRRAEGADSASD) is disordered. A compositionally biased stretch (basic residues) spans 47–64 (KKRKRQSKAKAKKSKKRR). Residues 101-129 (KSEDSEVVRRRKEVEREIERAAILRKKFD) are a coiled coil. The Q motif motif lies at 146 to 174 (ELVSRYGCDSYLVGNLSKLGFQEPTPIQR). The region spanning 177-347 (IPILLSGREC…RTIMHDAVRV (171 aa)) is the Helicase ATP-binding domain. 190–197 (APTGSGKT) serves as a coordination point for ATP. Positions 294–297 (DESD) match the DEAD box motif. Positions 375 to 519 (ALRQSFAESL…EVPSWIKALP (145 aa)) constitute a Helicase C-terminal domain.

The protein belongs to the DEAD box helicase family. DDX52/ROK1 subfamily.

It carries out the reaction ATP + H2O = ADP + phosphate + H(+). This is DEAD-box ATP-dependent RNA helicase 57 from Oryza sativa subsp. japonica (Rice).